A 261-amino-acid chain; its full sequence is 7beta-hydroxysteroid dehydrogenase (261 aa).

NADP(+) contacts are provided by residues 17–21 (TEGIG), 40–41 (RR), and 66–67 (DL). The active-site Proton acceptor is Tyr-156.

The protein belongs to the short-chain dehydrogenases/reductases (SDR) family. In terms of assembly, homodimer.

It carries out the reaction a 7beta-hydroxysteroid + NADP(+) = a 7-oxosteroid + NADPH + H(+). The catalysed reaction is ursocholate + NADP(+) = 3alpha,12alpha-dihydroxy-7-oxo-5beta-cholanate + NADPH + H(+). It catalyses the reaction 7-oxolithocholate + NADPH + H(+) = ursodeoxycholate + NADP(+). The enzyme catalyses 3alpha,7beta-dihydroxy-12-oxo-5beta-cholan-24-oate + NADP(+) = 7,12-dioxo-lithocholate + NADPH + H(+). It carries out the reaction 7beta-hydroxy-3,12-dioxo-5beta-cholan-24-oate + NADP(+) = dehydrocholate + NADPH + H(+). Functionally, 7beta-hydroxysteroid dehydrogenase that catalyzes the reduction of the 7-oxo group of 7-oxosteroids, such as 3alpha,12alpha-dihydroxy-7-oxo-5beta-cholanate, 7-oxolithocholate, 7,12-dioxo-lithocholate and dehydrocholate, to the corresponding 7beta-hydroxysteroids. Is also able to catalyze the reverse oxidation reactions. Together with 7alpha-HSDH encoded in the adjacent gene, is likely involved in the epimerization of the hydroxy group at C-7 of primary bile acids through 7-keto bile acid intermediates. In Clostridium sardiniense (Clostridium absonum), this protein is 7beta-hydroxysteroid dehydrogenase.